The following is a 285-amino-acid chain: Sulfotransferase 2A2 (285 aa).

3'-phosphoadenylyl sulfate-binding residues include Lys-44, Ser-45, Gly-46, Thr-47, Asn-48, and Trp-49. His-99 functions as the Proton acceptor in the catalytic mechanism. Positions 121, 129, 184, 218, 247, 248, and 249 each coordinate 3'-phosphoadenylyl sulfate.

The protein belongs to the sulfotransferase 1 family. In terms of tissue distribution, detected in liver.

The protein localises to the cytoplasm. The catalysed reaction is an alcohol + 3'-phosphoadenylyl sulfate = an alkyl sulfate + adenosine 3',5'-bisphosphate + H(+). Sulfotransferase that utilizes 3'-phospho-5'-adenylyl sulfate (PAPS) as sulfonate donor to catalyze the sulfate conjugation of a potential wide variety of acceptor molecules bearing a hydroxyl group. Sulfonation increases the water solubility of most compounds, and therefore their renal excretion, but it can also result in bioactivation to form active metabolites. This is Sulfotransferase 2A2 from Rattus norvegicus (Rat).